A 202-amino-acid polypeptide reads, in one-letter code: Recombination protein RecR (202 aa).

The C4-type zinc finger occupies 56 to 71 (CRVCGNLDSADPCSVC). The region spanning 79-179 (GLICVVESVG…SVTRLAQGIP (101 aa)) is the Toprim domain.

It belongs to the RecR family.

May play a role in DNA repair. It seems to be involved in an RecBC-independent recombinational process of DNA repair. It may act with RecF and RecO. In Granulibacter bethesdensis (strain ATCC BAA-1260 / CGDNIH1), this protein is Recombination protein RecR.